The primary structure comprises 102 residues: Protein Tat (102 aa).

The span at 1-10 shows a compositional bias: basic and acidic residues; sequence MEPVDPRLEP. Positions 1–20 are disordered; it reads MEPVDPRLEPWNHPGSQPKT. The segment at 1 to 24 is interaction with human CREBBP; it reads MEPVDPRLEPWNHPGSQPKTACNK. The tract at residues 1 to 48 is transactivation; that stretch reads MEPVDPRLEPWNHPGSQPKTACNKCYCKKCCYHCMCCFTKKGLGISYG. Positions 22, 25, and 27 each coordinate Zn(2+). Positions 22–37 are cysteine-rich; it reads CNKCYCKKCCYHCMCC. Lysine 28 carries the N6-acetyllysine; by host PCAF modification. Zn(2+) contacts are provided by cysteine 30, histidine 33, cysteine 34, and cysteine 37. The core stretch occupies residues 38–48; that stretch reads FTKKGLGISYG. The tract at residues 47–102 is disordered; sequence YGRKKRSQRRRPPKSSKDHQDPIPEQPLSRQQPGDQTGQKKQKKALEGKTEADPCD. Positions 48 to 60 are enriched in basic residues; sequence GRKKRSQRRRPPK. The short motif at 49–57 is the Nuclear localization signal, RNA-binding (TAR), and protein transduction element; that stretch reads RKKRSQRRR. The interval 49 to 87 is interaction with the host capping enzyme RNGTT; sequence RKKRSQRRRPPKSSKDHQDPIPEQPLSRQQPGDQTGQKK. Lysine 50 and lysine 51 each carry N6-acetyllysine; by host EP300 and GCN5L2. Residue arginine 52 is modified to Asymmetric dimethylarginine; by host PRMT6. A compositionally biased stretch (polar residues) spans 74–85; the sequence is LSRQQPGDQTGQ. The span at 90-102 shows a compositional bias: basic and acidic residues; the sequence is KALEGKTEADPCD.

It belongs to the lentiviruses Tat family. As to quaternary structure, interacts with host CCNT1. Associates with the P-TEFb complex composed at least of Tat, P-TEFb (CDK9 and CCNT1), TAR RNA, RNA Pol II. Recruits the HATs CREBBP, TAF1/TFIID, EP300, PCAF and GCN5L2. Interacts with host KAT5/Tip60; this interaction targets the latter to degradation. Interacts with the host deacetylase SIRT1. Interacts with host capping enzyme RNGTT; this interaction stimulates RNGTT. Binds to host KDR, and to the host integrins ITGAV/ITGB3 and ITGA5/ITGB1. Interacts with host KPNB1/importin beta-1 without previous binding to KPNA1/importin alpha-1. Interacts with EIF2AK2. Interacts with host nucleosome assembly protein NAP1L1; this interaction may be required for the transport of Tat within the nucleus, since the two proteins interact at the nuclear rim. Interacts with host C1QBP/SF2P32; this interaction involves lysine-acetylated Tat. Interacts with the host chemokine receptors CCR2, CCR3 and CXCR4. Interacts with host DPP4/CD26; this interaction may trigger an anti-proliferative effect. Interacts with host LDLR. Interacts with the host extracellular matrix metalloproteinase MMP1. Interacts with host PRMT6; this interaction mediates Tat's methylation. Interacts with, and is ubiquitinated by MDM2/Hdm2. Interacts with host PSMC3 and HTATIP2. Interacts with STAB1; this interaction may overcome SATB1-mediated repression of IL2 and IL2RA (interleukin) in T cells by binding to the same domain than HDAC1. Interacts (when acetylated) with human CDK13, thereby increasing HIV-1 mRNA splicing and promoting the production of the doubly spliced HIV-1 protein Nef. Interacts with host TBP; this interaction modulates the activity of transcriptional pre-initiation complex. Interacts with host RELA. Interacts with host PLSCR1; this interaction negatively regulates Tat transactivation activity by altering its subcellular distribution. In terms of processing, asymmetrical arginine methylation by host PRMT6 seems to diminish the transactivation capacity of Tat and affects the interaction with host CCNT1. Post-translationally, acetylation by EP300, CREBBP, GCN5L2/GCN5 and PCAF regulates the transactivation activity of Tat. EP300-mediated acetylation of Lys-50 promotes dissociation of Tat from the TAR RNA through the competitive binding to PCAF's bromodomain. In addition, the non-acetylated Tat's N-terminus can also interact with PCAF. PCAF-mediated acetylation of Lys-28 enhances Tat's binding to CCNT1. Lys-50 is deacetylated by SIRT1. Polyubiquitination by host MDM2 does not target Tat to degradation, but activates its transactivation function and fosters interaction with CCNT1 and TAR RNA. In terms of processing, phosphorylated by EIF2AK2 on serine and threonine residues adjacent to the basic region important for TAR RNA binding and function. Phosphorylation of Tat by EIF2AK2 is dependent on the prior activation of EIF2AK2 by dsRNA.

It localises to the host nucleus. The protein localises to the host nucleolus. Its subcellular location is the host cytoplasm. The protein resides in the secreted. In terms of biological role, transcriptional activator that increases RNA Pol II processivity, thereby increasing the level of full-length viral transcripts. Recognizes a hairpin structure at the 5'-LTR of the nascent viral mRNAs referred to as the transactivation responsive RNA element (TAR) and recruits the cyclin T1-CDK9 complex (P-TEFb complex) that will in turn hyperphosphorylate the RNA polymerase II to allow efficient elongation. The CDK9 component of P-TEFb and other Tat-activated kinases hyperphosphorylate the C-terminus of RNA Pol II that becomes stabilized and much more processive. Other factors such as HTATSF1/Tat-SF1, SUPT5H/SPT5, and HTATIP2 are also important for Tat's function. Besides its effect on RNA Pol II processivity, Tat induces chromatin remodeling of proviral genes by recruiting the histone acetyltransferases (HATs) CREBBP, EP300 and PCAF to the chromatin. This also contributes to the increase in proviral transcription rate, especially when the provirus integrates in transcriptionally silent region of the host genome. To ensure maximal activation of the LTR, Tat mediates nuclear translocation of NF-kappa-B by interacting with host RELA. Through its interaction with host TBP, Tat may also modulate transcription initiation. Tat can reactivate a latently infected cell by penetrating in it and transactivating its LTR promoter. In the cytoplasm, Tat is thought to act as a translational activator of HIV-1 mRNAs. Extracellular circulating Tat can be endocytosed by surrounding uninfected cells via the binding to several surface receptors such as CD26, CXCR4, heparan sulfate proteoglycans (HSPG) or LDLR. Neurons are rarely infected, but they internalize Tat via their LDLR. Through its interaction with nuclear HATs, Tat is potentially able to control the acetylation-dependent cellular gene expression. Modulates the expression of many cellular genes involved in cell survival, proliferation or in coding for cytokines or cytokine receptors. Tat plays a role in T-cell and neurons apoptosis. Tat induced neurotoxicity and apoptosis probably contribute to neuroAIDS. Circulating Tat also acts as a chemokine-like and/or growth factor-like molecule that binds to specific receptors on the surface of the cells, affecting many cellular pathways. In the vascular system, Tat binds to ITGAV/ITGB3 and ITGA5/ITGB1 integrins dimers at the surface of endothelial cells and competes with bFGF for heparin-binding sites, leading to an excess of soluble bFGF. The protein is Protein Tat of Human immunodeficiency virus type 1 group N (isolate YBF106) (HIV-1).